The primary structure comprises 558 residues: Potassium-transporting ATPase potassium-binding subunit (558 aa).

A run of 12 helical transmembrane segments spans residues 2-22 (LQGFVQIALILAILVATAPLL), 66-86 (VSAALISNLVMGVFVFLILMF), 135-155 (ALGFLMFTSAATGIAVAIAFI), 177-197 (ILLPISLVGAILLLVAGVPET), 253-273 (LLETVIMMVIPAGLIITYGIM), 280-300 (GWLIFWMVFILYGILIAIAAV), 327-347 (FGWVLTALWAVSTTGTMCGAV), 354-374 (LMPPGGFVTLSDLFLQIIWGG), 378-398 (GTAYLFVFLILTVFLTGLMVG), 413-433 (IVLASLILLIHPIAILIPTAI), 482-502 (LSASFSLIAGRYVPIVALIFL), and 528-548 (GITAGAIIILGALTFLPILVL).

It belongs to the KdpA family. In terms of assembly, the system is composed of three essential subunits: KdpA, KdpB and KdpC.

The protein resides in the cell inner membrane. Its function is as follows. Part of the high-affinity ATP-driven potassium transport (or Kdp) system, which catalyzes the hydrolysis of ATP coupled with the electrogenic transport of potassium into the cytoplasm. This subunit binds the periplasmic potassium ions and delivers the ions to the membrane domain of KdpB through an intramembrane tunnel. The protein is Potassium-transporting ATPase potassium-binding subunit of Synechocystis sp. (strain ATCC 27184 / PCC 6803 / Kazusa).